Here is a 364-residue protein sequence, read N- to C-terminus: Polygalacturonase (364 aa).

The N-terminal stretch at 1–21 (MVAYALTSMLLSAGALVAAAP) is a signal peptide. The propeptide occupies 22 to 27 (SGLDAR). Cys30 and Cys45 are oxidised to a cystine. PbH1 repeat units follow at residues 158–188 (VTGLTLDRITIDNSAGDSAGAHNTDAFDIGS), 189–210 (SSGITISNANIKNQDDCVAINS), 211–231 (GSDIHVTNCQCSGGHGVSIGS), 240–261 (VKGVVVSGTTIANSDNGVRIKT), 269–291 (VSDITYENITLKNIAKYGIVIEQ), and 303–348 (TTGV…SITG). Asp203 acts as the Proton donor in catalysis. A disulfide bridge connects residues Cys205 and Cys221. Residue His225 is part of the active site. Asn276 carries N-linked (GlcNAc...) asparagine glycosylation. A disulfide bond links Cys331 and Cys336. A glycan (N-linked (GlcNAc...) asparagine) is linked at Asn340. The cysteines at positions 355 and 364 are disulfide-linked.

This sequence belongs to the glycosyl hydrolase 28 family.

It localises to the secreted. The catalysed reaction is (1,4-alpha-D-galacturonosyl)n+m + H2O = (1,4-alpha-D-galacturonosyl)n + (1,4-alpha-D-galacturonosyl)m.. Its function is as follows. Involved in maceration and soft-rotting of plant tissue. Hydrolyzes the 1,4-alpha glycosidic bonds of de-esterified pectate in the smooth region of the plant cell wall. In Cochliobolus carbonum (Maize leaf spot fungus), this protein is Polygalacturonase (PGN1).